Consider the following 320-residue polypeptide: SPX domain-containing protein 4 (320 aa).

The 170-residue stretch at 1-170 (MKFGKDFRSH…GGLLSLPFTQ (170 aa)) folds into the SPX domain. 2 disordered regions span residues 209 to 233 (SSSA…VDVE) and 275 to 320 (CSGA…PRDE). The span at 278-289 (AITSESDSYSDS) shows a compositional bias: polar residues. Acidic residues predominate over residues 290-299 (QIEDAEDDDK). Residues 304-313 (REQNTAQNAA) are compositionally biased toward polar residues.

In terms of assembly, homodimer. Interacts (via N-terminus) with PHR2 (via C-terminus) in the presence of inositol polyphosphate. Interacts with BHLH6. Degraded under Pi starvation conditions through the ubiquitin/26S proteasome pathway. In terms of tissue distribution, widely expressed. Detected in root cells, with the exception of epidermis, and in mesophyll and vascular bundles in leaves.

It localises to the membrane. It is found in the nucleus. The protein localises to the cytoplasm. Functionally, inositol polyphosphate sensor that associates with transcription factors to regulate Pi starvation responses. The SPX domain provides a basic binding surface for inositol polyphosphate signaling molecules. Interacts with PHR2 to inhibit its translocation to the nucleus and repress its DNA-binding activity, and then negatively regulate Pi signaling. In Oryza sativa subsp. japonica (Rice), this protein is SPX domain-containing protein 4.